A 420-amino-acid chain; its full sequence is Tyrosine--tRNA ligase (420 aa).

Y36 is an L-tyrosine binding site. The 'HIGH' region motif lies at 41-50 (PTADSLHIGH). L-tyrosine contacts are provided by Y170 and Q174. Positions 231–235 (KFGKS) match the 'KMSKS' region motif. Position 234 (K234) interacts with ATP. The S4 RNA-binding domain maps to 353 to 420 (SNIIDVLIET…KKKYFMVNYK (68 aa)).

It belongs to the class-I aminoacyl-tRNA synthetase family. TyrS type 1 subfamily. As to quaternary structure, homodimer.

The protein localises to the cytoplasm. It carries out the reaction tRNA(Tyr) + L-tyrosine + ATP = L-tyrosyl-tRNA(Tyr) + AMP + diphosphate + H(+). Functionally, catalyzes the attachment of tyrosine to tRNA(Tyr) in a two-step reaction: tyrosine is first activated by ATP to form Tyr-AMP and then transferred to the acceptor end of tRNA(Tyr). The protein is Tyrosine--tRNA ligase of Staphylococcus haemolyticus (strain JCSC1435).